Consider the following 147-residue polypeptide: Globin, major polymeric component P1 (147 aa).

The region spanning histidine 2–glutamine 146 is the Globin domain. Histidine 96 is a binding site for heme b.

Belongs to the globin family. Polymer.

The polypeptide is Globin, major polymeric component P1 (Glycera dibranchiata (Bloodworm)).